We begin with the raw amino-acid sequence, 280 residues long: 4-diphosphocytidyl-2-C-methyl-D-erythritol kinase (280 aa).

Lys8 is an active-site residue. ATP is bound at residue 91–101 (PVAAGLAGGST). The active site involves Asp133.

The protein belongs to the GHMP kinase family. IspE subfamily.

The catalysed reaction is 4-CDP-2-C-methyl-D-erythritol + ATP = 4-CDP-2-C-methyl-D-erythritol 2-phosphate + ADP + H(+). It functions in the pathway isoprenoid biosynthesis; isopentenyl diphosphate biosynthesis via DXP pathway; isopentenyl diphosphate from 1-deoxy-D-xylulose 5-phosphate: step 3/6. Catalyzes the phosphorylation of the position 2 hydroxy group of 4-diphosphocytidyl-2C-methyl-D-erythritol. This chain is 4-diphosphocytidyl-2-C-methyl-D-erythritol kinase, found in Clostridium botulinum (strain Okra / Type B1).